A 459-amino-acid polypeptide reads, in one-letter code: UNC93-like protein 1 (459 aa).

The segment at M1–K26 is disordered. The next 11 membrane-spanning stretches (helical) occupy residues L38 to G58, A73 to G93, L96 to N116, A122 to E142, I159 to I179, Y195 to A215, L251 to V271, F287 to F307, G314 to A334, G355 to Y375, and L425 to F445.

The protein belongs to the unc-93 family.

Its subcellular location is the membrane. The chain is UNC93-like protein 1 from Arabidopsis thaliana (Mouse-ear cress).